The chain runs to 276 residues: tRNA dimethylallyltransferase (276 aa).

Positions 9 to 12 are interaction with substrate tRNA; sequence DSLS.

Belongs to the IPP transferase family. Monomer. Requires Mg(2+) as cofactor.

It carries out the reaction adenosine(37) in tRNA + dimethylallyl diphosphate = N(6)-dimethylallyladenosine(37) in tRNA + diphosphate. Its function is as follows. Catalyzes the transfer of a dimethylallyl group onto the adenine at position 37 in tRNAs that read codons beginning with uridine, leading to the formation of N6-(dimethylallyl)adenosine (i(6)A). The polypeptide is tRNA dimethylallyltransferase (miaA) (Helicobacter pylori (strain HPAG1)).